A 471-amino-acid chain; its full sequence is Mannose-1-phosphate guanylyltransferase (471 aa).

It belongs to the mannose-6-phosphate isomerase type 2 family.

It catalyses the reaction alpha-D-mannose 1-phosphate + GTP + H(+) = GDP-alpha-D-mannose + diphosphate. The protein operates within nucleotide-sugar biosynthesis; GDP-alpha-D-mannose biosynthesis; GDP-alpha-D-mannose from alpha-D-mannose 1-phosphate (GTP route): step 1/1. Functionally, involved in GDP-mannose biosynthesis which serves as the activated sugar nucleotide precursor for mannose residues in cell surface polysaccharides. This enzyme participates in synthesis of the LPS O antigen. In Salmonella montevideo, this protein is Mannose-1-phosphate guanylyltransferase (manC).